The sequence spans 167 residues: Small ribosomal subunit protein uS5 (167 aa).

The 64-residue stretch at 12 to 75 (LQEKLITVNR…EQARRNMITI (64 aa)) folds into the S5 DRBM domain.

Belongs to the universal ribosomal protein uS5 family. Part of the 30S ribosomal subunit. Contacts proteins S4 and S8.

Its function is as follows. With S4 and S12 plays an important role in translational accuracy. Functionally, located at the back of the 30S subunit body where it stabilizes the conformation of the head with respect to the body. This chain is Small ribosomal subunit protein uS5, found in Buchnera aphidicola subsp. Acyrthosiphon pisum (strain APS) (Acyrthosiphon pisum symbiotic bacterium).